The following is a 542-amino-acid chain: 2,3-bisphosphoglycerate-independent phosphoglycerate mutase (542 aa).

D24 and S74 together coordinate Mn(2+). The Phosphoserine intermediate role is filled by S74. Substrate is bound by residues H135, 165 to 166 (RD), R197, R203, 268 to 271 (RPDR), and K341. Residues D408, H412, D449, H450, and H467 each coordinate Mn(2+).

The protein belongs to the BPG-independent phosphoglycerate mutase family. Monomer. Mn(2+) serves as cofactor.

The catalysed reaction is (2R)-2-phosphoglycerate = (2R)-3-phosphoglycerate. It participates in carbohydrate degradation; glycolysis; pyruvate from D-glyceraldehyde 3-phosphate: step 3/5. Its function is as follows. Catalyzes the interconversion of 2-phosphoglycerate and 3-phosphoglycerate. The protein is 2,3-bisphosphoglycerate-independent phosphoglycerate mutase of Prochlorococcus marinus (strain NATL1A).